The chain runs to 883 residues: Integrator complex subunit 6-A (883 aa).

One can recognise a VWFA domain in the interval 3 to 227 (ILLFLLDTSA…QCLESLVQKV (225 aa)). The Inhibitory loop motif lies at 626 to 633 (MMIDEADE).

Belongs to the Integrator subunit 6 family. Component of the Integrator complex, composed of core subunits INTS1, INTS2, INTS3, INTS4, INTS5, INTS6, INTS7, INTS8, INTS9/RC74, INTS10, INTS11/CPSF3L, INTS12, INTS13, INTS14 and INTS15. The core complex associates with protein phosphatase 2A subunits PPP2CA and PPP2R1A, to form the Integrator-PP2A (INTAC) complex.

Its subcellular location is the nucleus. It localises to the chromosome. Component of the integrator complex, a multiprotein complex that terminates RNA polymerase II (Pol II) transcription in the promoter-proximal region of genes. The integrator complex provides a quality checkpoint during transcription elongation by driving premature transcription termination of transcripts that are unfavorably configured for transcriptional elongation: the complex terminates transcription by (1) catalyzing dephosphorylation of the C-terminal domain (CTD) of Pol II subunit POLR2A/RPB1 and SUPT5H/SPT5, (2) degrading the exiting nascent RNA transcript via endonuclease activity and (3) promoting the release of Pol II from bound DNA. The integrator complex is also involved in terminating the synthesis of non-coding Pol II transcripts, such as enhancer RNAs (eRNAs), small nuclear RNAs (snRNAs), telomerase RNAs and long non-coding RNAs (lncRNAs). Within the integrator complex, INTS6 acts as a molecular adapter that promotes assembly of protein phosphatase 2A (PP2A) subunits to the integrator core complex, promoting recruitment of PP2A to transcription pause-release checkpoint. This is Integrator complex subunit 6-A (ints6-a) from Xenopus laevis (African clawed frog).